Reading from the N-terminus, the 249-residue chain is Transmembrane protein 51 (249 aa).

A run of 2 helical transmembrane segments spans residues 17 to 37 and 64 to 84; these read IGLG…VPGF and VAYV…CLSI. Disordered regions lie at residues 95-126, 161-199, and 213-249; these read ELAR…SRYY, TGLD…PLKV, and RITL…RPPD. The segment covering 99–108 has biased composition (polar residues); the sequence is IQQQAGTVPH. 4 positions are modified to phosphoserine: Ser-109, Ser-114, Ser-178, and Ser-188. Polar residues predominate over residues 167–178; that stretch reads TPTSTRAETETS. Residues 190–199 are compositionally biased toward basic residues; that stretch reads LAKRLKPLKV. The segment covering 220–234 has biased composition (pro residues); the sequence is NVPPPSIEPLTPPPL.

It is found in the membrane. The sequence is that of Transmembrane protein 51 (Tmem51) from Mus musculus (Mouse).